A 124-amino-acid chain; its full sequence is Small ribosomal subunit protein bS6 (124 aa).

Positions 97-124 (TGPSPMMKEVQREEAKKAAAAQPTEAQA) are disordered. Positions 114-124 (AAAAQPTEAQA) are enriched in low complexity.

It belongs to the bacterial ribosomal protein bS6 family.

Binds together with bS18 to 16S ribosomal RNA. This is Small ribosomal subunit protein bS6 from Paraburkholderia phymatum (strain DSM 17167 / CIP 108236 / LMG 21445 / STM815) (Burkholderia phymatum).